The primary structure comprises 1346 residues: Proline-rich protein 36 (1346 aa).

Disordered regions lie at residues 1-403 (MDNK…TQLI), 426-512 (SVSS…QATP), 537-606 (PLTT…PSPL), 633-679 (PRQT…VSPL), 711-1155 (LETQ…AELA), and 1168-1240 (PPLA…RSPK). Over residues 10–26 (AGAAARTPAARAPGLLT) the composition is skewed to low complexity. Positions 27 to 40 (PRPPGSPRPPPPVT) are enriched in pro residues. Low complexity-rich tracts occupy residues 41–55 (PAAL…AVGR) and 86–97 (SSRNPASRPPAS). The segment covering 137-152 (SAEETVARGKATEAPK) has biased composition (basic and acidic residues). Residues 165–177 (SGPTPGTPSPAMA) are compositionally biased toward low complexity. The segment covering 191 to 203 (RPAPSARPRPPTE) has biased composition (pro residues). Positions 208–220 (SVSSASEHSTTEP) are enriched in polar residues. Composition is skewed to low complexity over residues 235–255 (QRPA…PARS) and 293–312 (APAL…PSGT). Pro residues-rich tracts occupy residues 329–343 (ATLP…PPPA), 371–380 (PLAPPSPSAP), and 387–397 (PSPPATPPSQV). Over residues 426–464 (SVSSPLQSMPPTQANPALPSLPTLLSPLATPPLSAMSPL) the composition is skewed to low complexity. The span at 494–506 (TPPPQASPSPSPP) shows a compositional bias: pro residues. A compositionally biased stretch (low complexity) spans 546–558 (PPLVSPSLLASPP). Residues 559-578 (LQAPPHPQAPPSMTTPPMQA) show a composition bias toward pro residues. Residues 633-647 (PRQTQASLISPSRPA) are compositionally biased toward polar residues. The segment covering 648–657 (STPPDSPPLQ) has biased composition (pro residues). The span at 658-679 (APLSLPASPPLQTSLSPAVSPL) shows a compositional bias: low complexity. The segment covering 724-733 (TPPASLTTPP) has biased composition (polar residues). Composition is skewed to pro residues over residues 781–821 (ETPP…PALA) and 829–865 (PSPP…PPLS). The span at 866 to 875 (PLATPSPQAP) shows a compositional bias: low complexity. 3 stretches are compositionally biased toward pro residues: residues 887–917 (FSPP…PSQA), 926–997 (LQVP…PPAS), and 1004–1015 (AKPPPQAPPALA). Composition is skewed to low complexity over residues 1029-1046 (FPGQ…MSPL), 1137-1146 (DSGPEGGAAA), and 1224-1239 (GKAA…SRSP). S1310 carries the post-translational modification Phosphoserine.

The polypeptide is Proline-rich protein 36 (Homo sapiens (Human)).